The following is a 217-amino-acid chain: Thymidylate kinase (217 aa).

7-14 (GIEGTGKT) lines the ATP pocket.

The protein belongs to the thymidylate kinase family.

It catalyses the reaction dTMP + ATP = dTDP + ADP. Phosphorylation of dTMP to form dTDP in both de novo and salvage pathways of dTTP synthesis. In Maridesulfovibrio salexigens (strain ATCC 14822 / DSM 2638 / NCIMB 8403 / VKM B-1763) (Desulfovibrio salexigens), this protein is Thymidylate kinase.